The following is a 136-amino-acid chain: MLQPKKTKYDKRHKGRIKGNATRGTKLCFGKYGLKSLDPGWITDRQIESARVAATRYMKRQGQLWLNIFPDKPVTKKPQEVRMGKGKGVRDHWVSVVKPGRVLIEVDGVDLLMGKEALRLASQKLPVRTKFIIKNA.

This sequence belongs to the universal ribosomal protein uL16 family. Part of the 50S ribosomal subunit.

Functionally, binds 23S rRNA and is also seen to make contacts with the A and possibly P site tRNAs. The polypeptide is Large ribosomal subunit protein uL16 (Karelsulcia muelleri (strain GWSS) (Sulcia muelleri)).